The sequence spans 293 residues: ADP-forming sulfoacetate-CoA ligase subunit SauD (293 aa).

Residues 17 to 20 (TGKE), Lys43, and 96 to 98 (IAD) contribute to the CoA site. Catalysis depends on His251, which acts as the Tele-phosphohistidine intermediate.

Belongs to the succinate/malate CoA ligase alpha subunit family. In terms of assembly, forms a complex with SauC.

It carries out the reaction sulfoacetate + ATP + CoA = sulfoacetyl-CoA + ADP + phosphate. Functionally, involved in the degradation of sulfoacetate. Catalyzes the CoA- and ATP-dependent conversion of sulfoacetate to sulfoacetyl-CoA and ADP. Cannot use other sulfonic and carboxylic acids, and shows only residual activity with 3-sulfopropanoate and malonic acid. The protein is ADP-forming sulfoacetate-CoA ligase subunit SauD of Bilophila wadsworthia (strain 3_1_6).